The chain runs to 250 residues: MDNNNNNNNQQPPPTSVYPPGSAVTTVIPPPPSGSASIVTGGGATYHHLLQQQQQQLQMFWTYQRQEIEQVNDFKNHQLPLARIKKIMKADEDVRMISAEAPILFAKACELFILELTIRSWLHAEENKRRTLQKNDIAAAITRTDIFDFLVDIVPREEIKEEEDAASALGGGGMVAPAASGVPYYYPPMGQPAVPGGMMIGRPAMDPSGVYAQPPSQAWQSVWQNSAGGGDDVSYGSGGSSGHGNLDSQG.

Residues 1-10 (MDNNNNNNNQ) are compositionally biased toward low complexity. Disordered stretches follow at residues 1–35 (MDNN…PSGS) and 209–250 (GVYA…DSQG). Over residues 214 to 225 (PPSQAWQSVWQN) the composition is skewed to polar residues. Over residues 227 to 242 (AGGGDDVSYGSGGSSG) the composition is skewed to gly residues.

It belongs to the NFYC/HAP5 subunit family. As to quaternary structure, heterotrimeric transcription factor composed of three components, NF-YA, NF-YB and NF-YC. NF-YB and NF-YC must interact and dimerize for NF-YA association and DNA binding. As to expression, ubiquitous. Present in etiolated seedlings.

It localises to the nucleus. In terms of biological role, stimulates the transcription of various genes by recognizing and binding to a CCAAT motif in promoters. Involved in the abscisic acid (ABA) signaling pathway. The chain is Nuclear transcription factor Y subunit C-4 (NFYC4) from Arabidopsis thaliana (Mouse-ear cress).